The primary structure comprises 176 residues: ATP-dependent protease subunit HslV (176 aa).

Thr-2 is a catalytic residue. Na(+) is bound by residues Gly-157, Cys-160, and Thr-163.

It belongs to the peptidase T1B family. HslV subfamily. As to quaternary structure, a double ring-shaped homohexamer of HslV is capped on each side by a ring-shaped HslU homohexamer. The assembly of the HslU/HslV complex is dependent on binding of ATP.

It is found in the cytoplasm. It carries out the reaction ATP-dependent cleavage of peptide bonds with broad specificity.. Allosterically activated by HslU binding. Protease subunit of a proteasome-like degradation complex believed to be a general protein degrading machinery. In Pseudomonas savastanoi pv. phaseolicola (strain 1448A / Race 6) (Pseudomonas syringae pv. phaseolicola (strain 1448A / Race 6)), this protein is ATP-dependent protease subunit HslV.